Reading from the N-terminus, the 709-residue chain is Homeobox-leucine zipper protein HDG4 (709 aa).

The disordered stretch occupies residues 61–92; sequence ESGSGKSTGSGHDPVENTAIEQEPPAAKKKRY. The homeobox DNA-binding region spans 88–147; that stretch reads KKKRYHRHTASQIQQMEALFKENAHPDTKTRLRLSKKLGLSPIQVKFWFQNKRTQIKAQQ. A coiled-coil region spans residues 137–205; it reads QNKRTQIKAQ…LDRLRSIVSM (69 aa). The START domain maps to 229 to 466; it reads AEEEKAIDME…LKRQCERMAS (238 aa).

The protein belongs to the HD-ZIP homeobox family. Class IV subfamily. As to expression, expressed in flowers.

The protein resides in the nucleus. Its function is as follows. Probable transcription factor. This Arabidopsis thaliana (Mouse-ear cress) protein is Homeobox-leucine zipper protein HDG4.